A 163-amino-acid chain; its full sequence is uncharacterized protein (163 aa).

A disordered region spans residues 144–163 (WSHSQSQLGTPGRGKGALGF). Over residues 154-163 (PGRGKGALGF) the composition is skewed to gly residues.

This is an uncharacterized protein from Homo sapiens (Human).